The following is a 143-amino-acid chain: Endoribonuclease YbeY (143 aa).

Residues histidine 109, histidine 113, and aspartate 119 each coordinate Zn(2+).

It belongs to the endoribonuclease YbeY family. Zn(2+) is required as a cofactor.

The protein resides in the cytoplasm. Single strand-specific metallo-endoribonuclease involved in late-stage 70S ribosome quality control and in maturation of the 3' terminus of the 16S rRNA. This Christiangramia forsetii (strain DSM 17595 / CGMCC 1.15422 / KT0803) (Gramella forsetii) protein is Endoribonuclease YbeY.